Consider the following 237-residue polypeptide: Ribonuclease PH (237 aa).

Residues Arg-86 and 124–126 (GTR) contribute to the phosphate site.

This sequence belongs to the RNase PH family. Homohexameric ring arranged as a trimer of dimers.

The catalysed reaction is tRNA(n+1) + phosphate = tRNA(n) + a ribonucleoside 5'-diphosphate. In terms of biological role, phosphorolytic 3'-5' exoribonuclease that plays an important role in tRNA 3'-end maturation. Removes nucleotide residues following the 3'-CCA terminus of tRNAs; can also add nucleotides to the ends of RNA molecules by using nucleoside diphosphates as substrates, but this may not be physiologically important. Probably plays a role in initiation of 16S rRNA degradation (leading to ribosome degradation) during starvation. The protein is Ribonuclease PH of Nitrobacter hamburgensis (strain DSM 10229 / NCIMB 13809 / X14).